The chain runs to 112 residues: Large ribosomal subunit protein eL30x (112 aa).

Belongs to the eukaryotic ribosomal protein eL30 family.

This Arabidopsis thaliana (Mouse-ear cress) protein is Large ribosomal subunit protein eL30x (RPL30C).